We begin with the raw amino-acid sequence, 148 residues long: Small ribosomal subunit protein uS13 (148 aa).

Residues 128–148 (RGQRTKSTGRRGSTIGVRKKK) are disordered.

The protein belongs to the universal ribosomal protein uS13 family. In terms of assembly, part of the 30S ribosomal subunit. Forms a loose heterodimer with protein S19. Forms two bridges to the 50S subunit in the 70S ribosome.

Its function is as follows. Located at the top of the head of the 30S subunit, it contacts several helices of the 16S rRNA. In the 70S ribosome it contacts the 23S rRNA (bridge B1a) and protein L5 of the 50S subunit (bridge B1b), connecting the 2 subunits; these bridges are implicated in subunit movement. In Methanococcoides burtonii (strain DSM 6242 / NBRC 107633 / OCM 468 / ACE-M), this protein is Small ribosomal subunit protein uS13.